The chain runs to 173 residues: Putative metal-dependent hydrolase OB0413 (173 aa).

Zn(2+)-binding residues include His-64, His-155, and His-159.

The protein belongs to the metal hydrolase YfiT family. In terms of assembly, homodimer. Zn(2+) serves as cofactor.

It is found in the cytoplasm. Functionally, possible metal-dependent hydrolase. This is Putative metal-dependent hydrolase OB0413 from Oceanobacillus iheyensis (strain DSM 14371 / CIP 107618 / JCM 11309 / KCTC 3954 / HTE831).